The primary structure comprises 142 residues: Large ribosomal subunit protein uL11 (142 aa).

This sequence belongs to the universal ribosomal protein uL11 family. As to quaternary structure, part of the ribosomal stalk of the 50S ribosomal subunit. Interacts with L10 and the large rRNA to form the base of the stalk. L10 forms an elongated spine to which L12 dimers bind in a sequential fashion forming a multimeric L10(L12)X complex. One or more lysine residues are methylated.

Its function is as follows. Forms part of the ribosomal stalk which helps the ribosome interact with GTP-bound translation factors. This is Large ribosomal subunit protein uL11 from Alcanivorax borkumensis (strain ATCC 700651 / DSM 11573 / NCIMB 13689 / SK2).